The following is a 581-amino-acid chain: NADP-dependent malic enzyme 1 (581 aa).

The Proton donor role is filled by Y129. An NADP(+)-binding site is contributed by R182. The active-site Proton acceptor is the K200. A divalent metal cation contacts are provided by E272, D273, and D296. Residues D296, 325–341, and N437 contribute to the NADP(+) site; that span reads LFLG…ELIA.

The protein belongs to the malic enzymes family. As to quaternary structure, homohexamers and homooctamers. The cofactor is Mg(2+). It depends on Mn(2+) as a cofactor. Specifically expressed in roots (only in steles of secondary roots).

It localises to the cytoplasm. The enzyme catalyses (S)-malate + NADP(+) = pyruvate + CO2 + NADPH. The catalysed reaction is oxaloacetate + H(+) = pyruvate + CO2. This is NADP-dependent malic enzyme 1 (NADP-ME1) from Arabidopsis thaliana (Mouse-ear cress).